A 154-amino-acid chain; its full sequence is Nitrogen regulatory protein (154 aa).

The PTS EIIA type-2 domain occupies 6–150; the sequence is QILTPGRSLV…EALYQIVVDV (145 aa). Residue histidine 68 is the Tele-phosphohistidine intermediate of the active site.

The protein localises to the cytoplasm. Functionally, seems to have a role in regulating nitrogen assimilation. This Pseudomonas aeruginosa (strain ATCC 15692 / DSM 22644 / CIP 104116 / JCM 14847 / LMG 12228 / 1C / PRS 101 / PAO1) protein is Nitrogen regulatory protein (ptsN).